A 312-amino-acid polypeptide reads, in one-letter code: Putative S-adenosyl-L-methionine-dependent methyltransferase Mjls_0078 (312 aa).

S-adenosyl-L-methionine is bound by residues Asp134 and 163–164; that span reads DL.

The protein belongs to the UPF0677 family.

In terms of biological role, exhibits S-adenosyl-L-methionine-dependent methyltransferase activity. The polypeptide is Putative S-adenosyl-L-methionine-dependent methyltransferase Mjls_0078 (Mycobacterium sp. (strain JLS)).